Reading from the N-terminus, the 283-residue chain is 4-diphosphocytidyl-2-C-methyl-D-erythritol kinase (283 aa).

Lys12 is an active-site residue. 94–104 (PAQAGLGGGSS) contributes to the ATP binding site. Residue Asp136 is part of the active site.

The protein belongs to the GHMP kinase family. IspE subfamily.

The catalysed reaction is 4-CDP-2-C-methyl-D-erythritol + ATP = 4-CDP-2-C-methyl-D-erythritol 2-phosphate + ADP + H(+). The protein operates within isoprenoid biosynthesis; isopentenyl diphosphate biosynthesis via DXP pathway; isopentenyl diphosphate from 1-deoxy-D-xylulose 5-phosphate: step 3/6. Catalyzes the phosphorylation of the position 2 hydroxy group of 4-diphosphocytidyl-2C-methyl-D-erythritol. This is 4-diphosphocytidyl-2-C-methyl-D-erythritol kinase from Acidovorax ebreus (strain TPSY) (Diaphorobacter sp. (strain TPSY)).